A 145-amino-acid polypeptide reads, in one-letter code: Superoxide dismutase [Mn/Fe] (145 aa).

H10 and H64 together coordinate Fe(3+). Positions 10 and 64 each coordinate Mn(2+).

This sequence belongs to the iron/manganese superoxide dismutase family. It depends on Mn(2+) as a cofactor. Fe(3+) serves as cofactor.

It catalyses the reaction 2 superoxide + 2 H(+) = H2O2 + O2. In terms of biological role, destroys superoxide anion radicals which are normally produced within the cells and which are toxic to biological systems. Catalyzes the dismutation of superoxide anion radicals into O2 and H2O2 by successive reduction and oxidation of the transition metal ion at the active site. In Streptococcus salivarius, this protein is Superoxide dismutase [Mn/Fe] (sodA).